Reading from the N-terminus, the 556-residue chain is 2-succinyl-5-enolpyruvyl-6-hydroxy-3-cyclohexene-1-carboxylate synthase (556 aa).

The protein belongs to the TPP enzyme family. MenD subfamily. In terms of assembly, homodimer. It depends on Mg(2+) as a cofactor. Requires Mn(2+) as cofactor. Thiamine diphosphate is required as a cofactor.

It carries out the reaction isochorismate + 2-oxoglutarate + H(+) = 5-enolpyruvoyl-6-hydroxy-2-succinyl-cyclohex-3-ene-1-carboxylate + CO2. It participates in quinol/quinone metabolism; 1,4-dihydroxy-2-naphthoate biosynthesis; 1,4-dihydroxy-2-naphthoate from chorismate: step 2/7. Its pathway is quinol/quinone metabolism; menaquinone biosynthesis. Catalyzes the thiamine diphosphate-dependent decarboxylation of 2-oxoglutarate and the subsequent addition of the resulting succinic semialdehyde-thiamine pyrophosphate anion to isochorismate to yield 2-succinyl-5-enolpyruvyl-6-hydroxy-3-cyclohexene-1-carboxylate (SEPHCHC). The polypeptide is 2-succinyl-5-enolpyruvyl-6-hydroxy-3-cyclohexene-1-carboxylate synthase (Escherichia coli (strain SMS-3-5 / SECEC)).